The following is a 255-amino-acid chain: MGESARAAETSELGPLRRVVLKLSGESLAGNGGYGIDPGSLEVSVEQVLEAVEAGAELAIVVGGGNIFRGAQVADELGIESATADYMSMLGTVINALALQAALERRGVPTRVQSAIEIKEVAEPYIRRRAIRHLEKGRVVIFASGTGNPFFTTDTGAALRALEINADALLMAKNRVDGIYDKDPRVHGDARIVPRLDYMELLSRNLAVMDHTAATLCSGEGLPIIVFDILKSGNLRRILQGEKVGSLVWREPPER.

Residue 22–25 (KLSG) coordinates ATP. The segment at 30 to 35 (GNGGYG) is involved in allosteric activation by GTP. A UMP-binding site is contributed by glycine 64. The ATP site is built by glycine 65 and arginine 69. Residues aspartate 85 and 146–153 (TGNPFFTT) contribute to the UMP site. Positions 174, 180, and 183 each coordinate ATP.

This sequence belongs to the UMP kinase family. In terms of assembly, homohexamer.

Its subcellular location is the cytoplasm. The enzyme catalyses UMP + ATP = UDP + ADP. Its pathway is pyrimidine metabolism; CTP biosynthesis via de novo pathway; UDP from UMP (UMPK route): step 1/1. Its activity is regulated as follows. Allosterically activated by GTP. Inhibited by UTP. Functionally, catalyzes the reversible phosphorylation of UMP to UDP. The sequence is that of Uridylate kinase from Rubrobacter xylanophilus (strain DSM 9941 / JCM 11954 / NBRC 16129 / PRD-1).